Here is a 233-residue protein sequence, read N- to C-terminus: Putative nosiheptide resistance regulatory protein (233 aa).

The H-T-H motif DNA-binding region spans arginine 93–alanine 112. Residues proline 190–alanine 233 form a disordered region. Basic and acidic residues predominate over residues valine 217–alanine 233.

Seems to be involved in the regulation of nhs expression. This chain is Putative nosiheptide resistance regulatory protein, found in Streptomyces actuosus.